The primary structure comprises 402 residues: Pentalenic acid synthase (402 aa).

The interval 1–28 (MTEPGTSVSAPVAFPQDRTCPYDPPTAY) is disordered. Residue Cys351 participates in heme binding.

The protein belongs to the cytochrome P450 family. Heme serves as cofactor.

It catalyses the reaction 1-deoxypentalenate + reduced 2[4Fe-4S]-[ferredoxin] + O2 + 2 H(+) = pentalenate + oxidized 2[4Fe-4S]-[ferredoxin] + H2O. It participates in antibiotic biosynthesis; neopentalenolactone biosynthesis. Functionally, catalyzes the conversion of 1-deoxypentalenic acid to pentalenic acid in the biosynthesis of neopentalenolactone antibiotic. This chain is Pentalenic acid synthase (cyp28), found in Streptomyces avermitilis (strain ATCC 31267 / DSM 46492 / JCM 5070 / NBRC 14893 / NCIMB 12804 / NRRL 8165 / MA-4680).